The primary structure comprises 1391 residues: DNA-directed RNA polymerase subunit beta'' (1391 aa).

C224, C295, C302, and C305 together coordinate Zn(2+).

It belongs to the RNA polymerase beta' chain family. RpoC2 subfamily. In terms of assembly, in plastids the minimal PEP RNA polymerase catalytic core is composed of four subunits: alpha, beta, beta', and beta''. When a (nuclear-encoded) sigma factor is associated with the core the holoenzyme is formed, which can initiate transcription. It depends on Zn(2+) as a cofactor.

It localises to the plastid. Its subcellular location is the chloroplast. The catalysed reaction is RNA(n) + a ribonucleoside 5'-triphosphate = RNA(n+1) + diphosphate. DNA-dependent RNA polymerase catalyzes the transcription of DNA into RNA using the four ribonucleoside triphosphates as substrates. The protein is DNA-directed RNA polymerase subunit beta'' of Buxus microphylla (Littleleaf boxwood).